A 201-amino-acid chain; its full sequence is Small ribosomal subunit protein uS4c (201 aa).

The S4 RNA-binding domain maps to methionine 89–proline 157.

This sequence belongs to the universal ribosomal protein uS4 family. As to quaternary structure, part of the 30S ribosomal subunit. Contacts protein S5. The interaction surface between S4 and S5 is involved in control of translational fidelity.

It localises to the plastid. The protein localises to the chloroplast. In terms of biological role, one of the primary rRNA binding proteins, it binds directly to 16S rRNA where it nucleates assembly of the body of the 30S subunit. Functionally, with S5 and S12 plays an important role in translational accuracy. The chain is Small ribosomal subunit protein uS4c (rps4) from Hordeum vulgare (Barley).